The following is a 99-amino-acid chain: SAGA-associated factor 11 (99 aa).

The SGF11-type zinc-finger motif lies at 71–92 (IHCENCGRDVSANRLAAHLQRC).

The protein belongs to the SGF11 family. In terms of assembly, component of the 1.8 MDa SAGA transcription coactivator-HAT complex. SAGA is built of 5 distinct domains with specialized functions. Within the SAGA complex, SUS1, SGF11, SGF73 and UBP8 form an additional subcomplex of SAGA called the DUB module (deubiquitination module). Interacts directly with SGF73, SUS1 and UBP8.

It localises to the nucleus. Functions as a component of the transcription regulatory histone acetylation (HAT) complex SAGA. At the promoters, SAGA is required for recruitment of the basal transcription machinery. It influences RNA polymerase II transcriptional activity through different activities such as TBP interaction and promoter selectivity, interaction with transcription activators, and chromatin modification through histone acetylation and deubiquitination. SAGA acetylates nucleosomal histone H3 to some extent (to form H3K9ac, H3K14ac, H3K18ac and H3K23ac). SAGA interacts with DNA via upstream activating sequences (UASs). Involved in transcriptional regulation of a subset of SAGA-regulated genes. Within the SAGA complex, participates in a subcomplex, that specifically deubiquitinates histones H2B. The chain is SAGA-associated factor 11 from Saccharomyces cerevisiae (strain RM11-1a) (Baker's yeast).